The chain runs to 448 residues: Methylenetetrahydrofolate--tRNA-(uracil-5-)-methyltransferase TrmFO (448 aa).

FAD is bound at residue 13–18 (GAGLAG).

Belongs to the MnmG family. TrmFO subfamily. FAD is required as a cofactor.

The protein resides in the cytoplasm. The catalysed reaction is uridine(54) in tRNA + (6R)-5,10-methylene-5,6,7,8-tetrahydrofolate + NADH + H(+) = 5-methyluridine(54) in tRNA + (6S)-5,6,7,8-tetrahydrofolate + NAD(+). It carries out the reaction uridine(54) in tRNA + (6R)-5,10-methylene-5,6,7,8-tetrahydrofolate + NADPH + H(+) = 5-methyluridine(54) in tRNA + (6S)-5,6,7,8-tetrahydrofolate + NADP(+). In terms of biological role, catalyzes the folate-dependent formation of 5-methyl-uridine at position 54 (M-5-U54) in all tRNAs. This Streptococcus pyogenes serotype M28 (strain MGAS6180) protein is Methylenetetrahydrofolate--tRNA-(uracil-5-)-methyltransferase TrmFO.